The sequence spans 173 residues: MAEKRNIFLVGPMGAGKSTIGRQLAQQLNMEFFDSDQEIERRTGADVGWVFDVEGEDGFRDREEKVINELTEKQGIVLATGGGSVKSRETRNRLSARGVVVYLETTIEKQLARTQRDKKRPLLQVEAPPREVLEALARERNPLYEEIADVTIRTDEQSAKVVANQIINMLESS.

ATP is bound at residue 14 to 19 (GAGKST). A Mg(2+)-binding site is contributed by Ser18. Residues Asp36, Arg60, and Gly82 each coordinate substrate. Arg120 contributes to the ATP binding site. Arg140 is a binding site for substrate. Gln157 contributes to the ATP binding site.

Belongs to the shikimate kinase family. In terms of assembly, monomer. Mg(2+) serves as cofactor.

It localises to the cytoplasm. It carries out the reaction shikimate + ATP = 3-phosphoshikimate + ADP + H(+). It functions in the pathway metabolic intermediate biosynthesis; chorismate biosynthesis; chorismate from D-erythrose 4-phosphate and phosphoenolpyruvate: step 5/7. Its function is as follows. Catalyzes the specific phosphorylation of the 3-hydroxyl group of shikimic acid using ATP as a cosubstrate. The polypeptide is Shikimate kinase 1 (Sodalis glossinidius (strain morsitans)).